Reading from the N-terminus, the 91-residue chain is MARVTVQDAVEKIGNRFDLVLVAARRARQMQSGGKDPLVPEENDKTTVIALREIEEGLITNQILDVRERQEQQEQEAAELQAVTAIAEGRR.

The protein belongs to the RNA polymerase subunit omega family. As to quaternary structure, the RNAP catalytic core consists of 2 alpha, 1 beta, 1 beta' and 1 omega subunit. When a sigma factor is associated with the core the holoenzyme is formed, which can initiate transcription.

It carries out the reaction RNA(n) + a ribonucleoside 5'-triphosphate = RNA(n+1) + diphosphate. Functionally, promotes RNA polymerase assembly. Latches the N- and C-terminal regions of the beta' subunit thereby facilitating its interaction with the beta and alpha subunits. This Enterobacter sp. (strain 638) protein is DNA-directed RNA polymerase subunit omega.